An 81-amino-acid chain; its full sequence is Ferredoxin (81 aa).

The 4Fe-4S ferredoxin-type domain occupies 2-30 (KYTIVDKETCIACGACGAAAPDIYDYDED). The [4Fe-4S] cluster site is built by Cys11, Cys14, Cys17, and Cys61.

[4Fe-4S] cluster serves as cofactor.

In terms of biological role, ferredoxins are iron-sulfur proteins that transfer electrons in a wide variety of metabolic reactions. This is Ferredoxin from Bacillus thermoproteolyticus.